A 439-amino-acid polypeptide reads, in one-letter code: Amino-acid acetyltransferase (439 aa).

The N-acetyltransferase domain maps to 289–429; sequence EDIRIATVQD…DHYNYQRRSK (141 aa).

The protein belongs to the acetyltransferase family. ArgA subfamily.

It is found in the cytoplasm. It carries out the reaction L-glutamate + acetyl-CoA = N-acetyl-L-glutamate + CoA + H(+). Its pathway is amino-acid biosynthesis; L-arginine biosynthesis; N(2)-acetyl-L-ornithine from L-glutamate: step 1/4. This chain is Amino-acid acetyltransferase, found in Mannheimia succiniciproducens (strain KCTC 0769BP / MBEL55E).